Here is a 334-residue protein sequence, read N- to C-terminus: D-alanine--D-alanine ligase (334 aa).

An ATP-grasp domain is found at 124–329 (KMWFSALGIP…FAQYLSGNIL (206 aa)). 154–209 (ALAKWGSIFIKAASQGSSVGCYRVDSIEQLASSLEEAFTFSPYVVIEKTITARELE) contacts ATP. 3 residues coordinate Mg(2+): Asp-283, Glu-296, and Asn-298.

It belongs to the D-alanine--D-alanine ligase family. The cofactor is Mg(2+). Requires Mn(2+) as cofactor.

Its subcellular location is the cytoplasm. The enzyme catalyses 2 D-alanine + ATP = D-alanyl-D-alanine + ADP + phosphate + H(+). The protein operates within cell wall biogenesis; peptidoglycan biosynthesis. In terms of biological role, cell wall formation. The sequence is that of D-alanine--D-alanine ligase from Shewanella pealeana (strain ATCC 700345 / ANG-SQ1).